Reading from the N-terminus, the 853-residue chain is MSAIENFDAHTPMMQQYLKLKAQHPEILLFYRMGDFYELFYDDAKRASQLLDISLTKRGASAGEPIPMAGIPYHAVENYLAKLVNQGESVAICEQIGDPATSKGPVERKVVRIVTPGTISDEALLQERQDNLLAAIWQDSKGFGYATLDISSGRFRLSEPADRETMAAELQRSNPAELLYAEDFAEMSLIEGRRGLRRRPLWEFEIDTARQQLNLQFGTRDLVGFGVENAPRGLCAAGCLLQYAKDTQRTTLPHIRSITMEREQDSIIMDAATRRNLEITQNLAGGAENTLASVLDCTVTPMGSRMLKRWLHMPVRDTRVLLERQQTIGALQDFTAELQPVLRQVGDLERILARLALRTARPRDLARMRHAFQQLPELRAQLETVDSAPVQALREKMGEFAELRDLLERAIIDTPPVLVRDGGVIASGYNEELDEWRALADGATDYLERLEVRERERTGLDTLKVGFNAVHGYYIQISRGQSHLAPINYMRRQTLKNAERYIIPELKEYEDKVLTSKGKALALEKQLYEELFDLLLPHLEALQQSASALAELDVLVNLAERAYTLNYTCPTFIDKPGIRITEGRHPVVEQVLNEPFIANPLNLSPQRRMLIITGPNMGGKSTYMRQTALIALMAYIGSYVPAQKVEIGPIDRIFTRVGAADDLASGRSTFMVEMTETANILHNATEYSLVLMDEIGRGTSTYDGLSLAWACAENLANKIKALTLFATHYFELTQLPEKMEGVANVHLDALEHGDTIAFMHSVQDGAASKSYGLAVAALAGVPKEVIKRARQKLRELESISPNAAATQVDGTQMSLLSVPEETSPAVEALENLDPDSLTPRQALEWIYRLKSLV.

Residue 614-621 (GPNMGGKS) participates in ATP binding.

Belongs to the DNA mismatch repair MutS family.

In terms of biological role, this protein is involved in the repair of mismatches in DNA. It is possible that it carries out the mismatch recognition step. This protein has a weak ATPase activity. This is DNA mismatch repair protein MutS from Shigella flexneri serotype 5b (strain 8401).